The chain runs to 404 residues: Formate-dependent phosphoribosylglycinamide formyltransferase (404 aa).

N(1)-(5-phospho-beta-D-ribosyl)glycinamide is bound by residues 25–26 (EL) and Glu85. Residues Arg118, Lys159, 164–169 (SSGKGQ), 199–202 (EGFI), and Glu207 contribute to the ATP site. Residues 123 to 318 (RLAAEELGLP…EFELHARAIL (196 aa)) enclose the ATP-grasp domain. 2 residues coordinate Mg(2+): Glu277 and Glu289. N(1)-(5-phospho-beta-D-ribosyl)glycinamide-binding positions include Asp296, Lys365, and 372–373 (RR).

Belongs to the PurK/PurT family. In terms of assembly, homodimer.

The catalysed reaction is N(1)-(5-phospho-beta-D-ribosyl)glycinamide + formate + ATP = N(2)-formyl-N(1)-(5-phospho-beta-D-ribosyl)glycinamide + ADP + phosphate + H(+). Its pathway is purine metabolism; IMP biosynthesis via de novo pathway; N(2)-formyl-N(1)-(5-phospho-D-ribosyl)glycinamide from N(1)-(5-phospho-D-ribosyl)glycinamide (formate route): step 1/1. Functionally, involved in the de novo purine biosynthesis. Catalyzes the transfer of formate to 5-phospho-ribosyl-glycinamide (GAR), producing 5-phospho-ribosyl-N-formylglycinamide (FGAR). Formate is provided by PurU via hydrolysis of 10-formyl-tetrahydrofolate. The chain is Formate-dependent phosphoribosylglycinamide formyltransferase from Burkholderia pseudomallei (strain 1106a).